Here is a 408-residue protein sequence, read N- to C-terminus: MSTETTTGNSSLIPASSSSSSSDAIDPAPLLFNGDDNEGNNGGGGGERRSVRRQGLREAARFLSRASSGRVMREPSMLVREAAAEQLEERQSDWAYSKPVVVLDIVWNLAFVSVATAILVMSRKEHPIMPLRVWLLGYALQCVLHMVCVCVEYRRRNRRRTNRTTTTTPPRSRSSSSSSSSSSLEEEALGSRRNSGVQDLSLGHLDTESSSVAKHLESANTMFSFIWWIIGFYWVSAGGQELAQESPRIYWLSIVFLGFDVFFVVFCVALACVIGIAVCCCLPCIIAVLYAVADQEGASKEDIEQLTKFKFRKLGDANKHTNDEAQGTTEGIMTECGTDSPIEHTLLQEDAECCICLSAYEDGTELRELPCGHHFHCSCVDKWLYINATCPLCKYNILKSSNLDREEV.

The disordered stretch occupies residues M1 to R52. The span at S10–G34 shows a compositional bias: low complexity. 2 helical membrane-spanning segments follow: residues V100–V120 and V133–Y153. The interval R160–S195 is disordered. Low complexity predominate over residues R163–S183. Helical transmembrane passes span A219–G239, I254–I274, and G275–Q295. The RING-type; atypical zinc-finger motif lies at C353–K394.

The protein resides in the membrane. The enzyme catalyses S-ubiquitinyl-[E2 ubiquitin-conjugating enzyme]-L-cysteine + [acceptor protein]-L-lysine = [E2 ubiquitin-conjugating enzyme]-L-cysteine + N(6)-ubiquitinyl-[acceptor protein]-L-lysine.. It functions in the pathway protein modification; protein ubiquitination. In terms of biological role, mediates E2-dependent protein ubiquitination in vitro. The protein is E3 ubiquitin-protein ligase At1g12760 of Arabidopsis thaliana (Mouse-ear cress).